Here is a 129-residue protein sequence, read N- to C-terminus: uncharacterized protein (129 aa).

Basic residues predominate over residues 84–98 (QKTVSKKYKSRKGRR). The disordered stretch occupies residues 84-129 (QKTVSKKYKSRKGRRYTRERNISSEKNKTDKSHKVRVGKIQNINND). Positions 99–115 (YTRERNISSEKNKTDKS) are enriched in basic and acidic residues.

This is an uncharacterized protein from Acanthamoeba polyphaga mimivirus (APMV).